The following is a 338-amino-acid chain: UDP-N-acetylenolpyruvoylglucosamine reductase (338 aa).

Residues 17–188 form the FAD-binding PCMH-type domain; that stretch reads IAARTDWWID…MYVDYRLRLR (172 aa). R164 is an active-site residue. The active-site Proton donor is the S237. E333 is a catalytic residue.

Belongs to the MurB family. FAD serves as cofactor.

Its subcellular location is the cytoplasm. It catalyses the reaction UDP-N-acetyl-alpha-D-muramate + NADP(+) = UDP-N-acetyl-3-O-(1-carboxyvinyl)-alpha-D-glucosamine + NADPH + H(+). It participates in cell wall biogenesis; peptidoglycan biosynthesis. Its function is as follows. Cell wall formation. The sequence is that of UDP-N-acetylenolpyruvoylglucosamine reductase from Porphyromonas gingivalis (strain ATCC 33277 / DSM 20709 / CIP 103683 / JCM 12257 / NCTC 11834 / 2561).